A 78-amino-acid polypeptide reads, in one-letter code: Acyl carrier protein (78 aa).

One can recognise a Carrier domain in the interval 2–77 (SDIAERVKKI…DAIKYIGENM (76 aa)). O-(pantetheine 4'-phosphoryl)serine is present on S37.

The protein belongs to the acyl carrier protein (ACP) family. 4'-phosphopantetheine is transferred from CoA to a specific serine of apo-ACP by AcpS. This modification is essential for activity because fatty acids are bound in thioester linkage to the sulfhydryl of the prosthetic group.

It localises to the cytoplasm. Its pathway is lipid metabolism; fatty acid biosynthesis. In terms of biological role, carrier of the growing fatty acid chain in fatty acid biosynthesis. This is Acyl carrier protein from Magnetococcus marinus (strain ATCC BAA-1437 / JCM 17883 / MC-1).